The following is a 22-amino-acid chain: Hemoglobinase-like protein 2 (22 aa).

Belongs to the peptidase C13 family.

The enzyme catalyses Hydrolysis of proteins and small molecule substrates at -Asn-|-Xaa- bonds.. The protein is Hemoglobinase-like protein 2 of Fasciola hepatica (Liver fluke).